A 199-amino-acid polypeptide reads, in one-letter code: Transgelin-3 (199 aa).

A Calponin-homology (CH) domain is found at 24 to 136; sequence ADLENKLVDW…RTLMALGSVA (113 aa). Ser163 is subject to Phosphoserine. The stretch at 174-199 is one Calponin-like repeat; sequence IGLQMGSNKGASQAGMTGYGMPRQIM. Positions 176-188 are enriched in polar residues; the sequence is LQMGSNKGASQAG. Residues 176 to 199 form a disordered region; sequence LQMGSNKGASQAGMTGYGMPRQIM.

This sequence belongs to the calponin family. As to expression, widely expressed in the brain. Expression is increased in the superior frontal cortex of alcoholics, but not in the motor cortex or cerebellum.

This Homo sapiens (Human) protein is Transgelin-3 (TAGLN3).